Here is a 526-residue protein sequence, read N- to C-terminus: Peptide chain release factor 3 (526 aa).

The 270-residue stretch at 8-277 (NKRRTFAIIS…GLTEWAPKPQ (270 aa)) folds into the tr-type G domain. Residues 17–24 (SHPDAGKT), 85–89 (DTPGH), and 139–142 (NKLD) contribute to the GTP site.

The protein belongs to the TRAFAC class translation factor GTPase superfamily. Classic translation factor GTPase family. PrfC subfamily.

The protein resides in the cytoplasm. Functionally, increases the formation of ribosomal termination complexes and stimulates activities of RF-1 and RF-2. It binds guanine nucleotides and has strong preference for UGA stop codons. It may interact directly with the ribosome. The stimulation of RF-1 and RF-2 is significantly reduced by GTP and GDP, but not by GMP. This is Peptide chain release factor 3 from Actinobacillus pleuropneumoniae serotype 7 (strain AP76).